The primary structure comprises 181 residues: Adenine phosphoribosyltransferase (181 aa).

It belongs to the purine/pyrimidine phosphoribosyltransferase family. In terms of assembly, homodimer.

Its subcellular location is the cytoplasm. The catalysed reaction is AMP + diphosphate = 5-phospho-alpha-D-ribose 1-diphosphate + adenine. It functions in the pathway purine metabolism; AMP biosynthesis via salvage pathway; AMP from adenine: step 1/1. Its function is as follows. Catalyzes a salvage reaction resulting in the formation of AMP, that is energically less costly than de novo synthesis. This is Adenine phosphoribosyltransferase from Aeromonas salmonicida (strain A449).